A 133-amino-acid chain; its full sequence is MKKVESMNVVPFIDIMLVLLVIVLTTASFVQTSKLPISIPQVDKDSTDSKDVLDKKQVTIAISNKGSFYFDDKEISFENLKHKVSTLAKDTPIVLQGDKKSNLDNFIKVVDLLQTNNLKQLYILVEDKKNQKN.

Over 1–9 (MKKVESMNV) the chain is Cytoplasmic. A helical transmembrane segment spans residues 10-30 (VPFIDIMLVLLVIVLTTASFV). Topologically, residues 31-133 (QTSKLPISIP…LVEDKKNQKN (103 aa)) are periplasmic.

Belongs to the ExbD/TolR family.

The protein resides in the cell inner membrane. This is Putative biopolymer transport protein ExbD-like 2 from Helicobacter pylori (strain J99 / ATCC 700824) (Campylobacter pylori J99).